We begin with the raw amino-acid sequence, 268 residues long: Glycine/sarcosine N-methyltransferase (268 aa).

Residues Y26, W34, R43, A67, D88, 114 to 115, and L132 contribute to the S-adenosyl-L-methionine site; that span reads DW. Substrate-binding residues include N134, R167, and Y206.

It belongs to the class I-like SAM-binding methyltransferase superfamily. Glycine N-methyltransferase family. Monomer.

The enzyme catalyses glycine + 2 S-adenosyl-L-methionine = N,N-dimethylglycine + 2 S-adenosyl-L-homocysteine + 2 H(+). It carries out the reaction glycine + S-adenosyl-L-methionine = sarcosine + S-adenosyl-L-homocysteine + H(+). It catalyses the reaction sarcosine + S-adenosyl-L-methionine = N,N-dimethylglycine + S-adenosyl-L-homocysteine + H(+). The protein operates within amine and polyamine biosynthesis; betaine biosynthesis via glycine pathway; betaine from glycine: step 1/3. Its pathway is amine and polyamine biosynthesis; betaine biosynthesis via glycine pathway; betaine from glycine: step 2/3. Its activity is regulated as follows. p-chloromercuribenzoic acid inhibits more than 95% of the GSMT activities on glycine and sarcosine, and S-adenosylhomocysteine (AdoHcy) inhibits completely GSMT activities. In terms of biological role, catalyzes the methylation of glycine and sarcosine to sarcosine and dimethylglycine, respectively, with S-adenosylmethionine (AdoMet) acting as the methyl donor. It has strict specificity for glycine and sarcosine as the methyl group acceptors. The chain is Glycine/sarcosine N-methyltransferase from Halorhodospira halochloris (Ectothiorhodospira halochloris).